A 255-amino-acid polypeptide reads, in one-letter code: Ditrans,polycis-undecaprenyl-diphosphate synthase ((2E,6E)-farnesyl-diphosphate specific) (255 aa).

Residue Asp21 is part of the active site. Asp21 contributes to the Mg(2+) binding site. Substrate contacts are provided by residues 22–25 (GNGR), Trp26, Arg34, His38, and 66–68 (SSE). Asn69 acts as the Proton acceptor in catalysis. Substrate is bound by residues Trp70, Arg72, Arg189, and 195–197 (RIS). Glu208 lines the Mg(2+) pocket.

It belongs to the UPP synthase family. In terms of assembly, homodimer. It depends on Mg(2+) as a cofactor.

It catalyses the reaction 8 isopentenyl diphosphate + (2E,6E)-farnesyl diphosphate = di-trans,octa-cis-undecaprenyl diphosphate + 8 diphosphate. In terms of biological role, catalyzes the sequential condensation of isopentenyl diphosphate (IPP) with (2E,6E)-farnesyl diphosphate (E,E-FPP) to yield (2Z,6Z,10Z,14Z,18Z,22Z,26Z,30Z,34E,38E)-undecaprenyl diphosphate (di-trans,octa-cis-UPP). UPP is the precursor of glycosyl carrier lipid in the biosynthesis of bacterial cell wall polysaccharide components such as peptidoglycan and lipopolysaccharide. This chain is Ditrans,polycis-undecaprenyl-diphosphate synthase ((2E,6E)-farnesyl-diphosphate specific), found in Xylella fastidiosa (strain Temecula1 / ATCC 700964).